A 259-amino-acid polypeptide reads, in one-letter code: Protein unc-50 homolog A (259 aa).

At 1-82 the chain is on the cytoplasmic side; sequence MLPTTSVSPR…TKDQWARDDP (82 aa). Residues 83–103 traverse the membrane as a helical segment; the sequence is AFLVLLSIWLCVSTVGFGFVL. Over 104–112 the chain is Lumenal; it reads DMSFFETFK. The helical transmembrane segment at 113 to 133 threads the bilayer; it reads LLLWVVFIDCVGVGLLIATLM. Over 134–158 the chain is Cytoplasmic; it reads WFVSNKYMVKRQGKDYDVEWGYTFD. Residues 159-179 traverse the membrane as a helical segment; it reads VHLNAFYPLLVILHFIQLFFI. The Lumenal segment spans residues 180–181; sequence NH. The helical transmembrane segment at 182-202 threads the bilayer; the sequence is VILSGWFIGYFVGNTIWLIAI. The Cytoplasmic segment spans residues 203-222; it reads GYYIYITFLGYSALPFLKNT. A helical transmembrane segment spans residues 223-243; it reads VILLYPFAALALLYVLSLALG. The Lumenal portion of the chain corresponds to 244 to 259; the sequence is WNFTEKLCLFYKYRVR.

The protein belongs to the unc-50 family.

The protein localises to the nucleus inner membrane. It is found in the golgi apparatus membrane. In terms of biological role, involved in the cell surface expression of neuronal nicotinic receptors. Binds RNA. In Xenopus laevis (African clawed frog), this protein is Protein unc-50 homolog A (unc50-a).